The sequence spans 485 residues: Ribulose bisphosphate carboxylase large chain (485 aa).

Substrate is bound by residues asparagine 124 and threonine 174. Lysine 176 (proton acceptor) is an active-site residue. Lysine 178 lines the substrate pocket. Mg(2+) contacts are provided by lysine 202, aspartate 204, and glutamate 205. N6-carboxylysine is present on lysine 202. Histidine 294 (proton acceptor) is an active-site residue. Residues arginine 295, histidine 327, and serine 379 each coordinate substrate.

The protein belongs to the RuBisCO large chain family. Type I subfamily. As to quaternary structure, heterohexadecamer of 8 large chains and 8 small chains. Mg(2+) is required as a cofactor.

It carries out the reaction 2 (2R)-3-phosphoglycerate + 2 H(+) = D-ribulose 1,5-bisphosphate + CO2 + H2O. The enzyme catalyses D-ribulose 1,5-bisphosphate + O2 = 2-phosphoglycolate + (2R)-3-phosphoglycerate + 2 H(+). Its function is as follows. RuBisCO catalyzes two reactions: the carboxylation of D-ribulose 1,5-bisphosphate, the primary event in carbon dioxide fixation, as well as the oxidative fragmentation of the pentose substrate. Both reactions occur simultaneously and in competition at the same active site. The sequence is that of Ribulose bisphosphate carboxylase large chain from Rhodopseudomonas palustris (strain BisA53).